An 80-amino-acid chain; its full sequence is U-Asilidin(1)-Dg12 (80 aa).

The N-terminal stretch at 1 to 24 (MARLLVVSVGVFLAVIMLSSETMS) is a signal peptide. A propeptide spanning residues 25–46 (LPAGENLPALTLFEAQNQLIGL) is cleaved from the precursor. Intrachain disulfides connect Cys53–Cys67, Cys60–Cys71, and Cys66–Cys78.

The protein belongs to the asilidin-1 family. As to expression, expressed by the venom gland.

It is found in the secreted. Neurotoxin that may modulate ions channels (other than those tested). In vivo, induces neurotoxic effects when injected into insects (tested on L.cuprina and A.domesticus). The polypeptide is U-Asilidin(1)-Dg12 (Dolopus genitalis (Giant Australian assassin fly)).